Consider the following 414-residue polypeptide: DNA polymerase IV (414 aa).

The UmuC domain occupies isoleucine 8–glycine 189. Mg(2+) is bound by residues aspartate 12 and aspartate 108. Residue glutamate 109 is part of the active site. The segment at glutamate 394–arginine 414 is disordered.

It belongs to the DNA polymerase type-Y family. Monomer. The cofactor is Mg(2+).

It localises to the cytoplasm. It carries out the reaction DNA(n) + a 2'-deoxyribonucleoside 5'-triphosphate = DNA(n+1) + diphosphate. Poorly processive, error-prone DNA polymerase involved in untargeted mutagenesis. Copies undamaged DNA at stalled replication forks, which arise in vivo from mismatched or misaligned primer ends. These misaligned primers can be extended by PolIV. Exhibits no 3'-5' exonuclease (proofreading) activity. May be involved in translesional synthesis, in conjunction with the beta clamp from PolIII. The chain is DNA polymerase IV from Bacillus velezensis (strain DSM 23117 / BGSC 10A6 / LMG 26770 / FZB42) (Bacillus amyloliquefaciens subsp. plantarum).